Here is a 354-residue protein sequence, read N- to C-terminus: Peroxisomal membrane protein PEX32 (354 aa).

5 helical membrane-spanning segments follow: residues 24–44 (LLNM…VIFL), 63–83 (FIAI…ACTV), 84–104 (LPTI…TTID), 151–171 (GFSL…IFTV), and 173–193 (SFLL…SVAT). N319 carries N-linked (GlcNAc...) asparagine glycosylation.

The protein belongs to the PEX28-32 family. PEX30/31 subfamily.

Its subcellular location is the peroxisome membrane. It is found in the endoplasmic reticulum membrane. Its function is as follows. With PEX24, contributes to tethering of peroxisomes to the endoplasmic reticulum for organelle biogenesis, positioning and segregation. This chain is Peroxisomal membrane protein PEX32, found in Ogataea parapolymorpha (strain ATCC 26012 / BCRC 20466 / JCM 22074 / NRRL Y-7560 / DL-1) (Yeast).